The sequence spans 160 residues: Cyclic pyranopterin monophosphate synthase (160 aa).

Residues 76-78 (LCH) and 114-115 (ME) each bind substrate. The active site involves aspartate 129.

It belongs to the MoaC family. In terms of assembly, homohexamer; trimer of dimers.

The enzyme catalyses (8S)-3',8-cyclo-7,8-dihydroguanosine 5'-triphosphate = cyclic pyranopterin phosphate + diphosphate. The protein operates within cofactor biosynthesis; molybdopterin biosynthesis. Its function is as follows. Catalyzes the conversion of (8S)-3',8-cyclo-7,8-dihydroguanosine 5'-triphosphate to cyclic pyranopterin monophosphate (cPMP). The chain is Cyclic pyranopterin monophosphate synthase from Mesorhizobium japonicum (strain LMG 29417 / CECT 9101 / MAFF 303099) (Mesorhizobium loti (strain MAFF 303099)).